Consider the following 218-residue polypeptide: MSDTDDIPQLSADTLAALSMFQAEQQEKIEQLQSGIIEKIDEDWQLSQFWYDDETSRKLVAEGVAAALEGSEARPARIGCVSSPTLVKFFHETEEYKTGQIQLTLFEFDDRFGLKFPTEFVHYDYKHPTDLPAELLAKFDVIIADPPFLAAECLIKTAHSIRLLGKSDVKVLLCTGAIMEDYASRLMAMHRTSFEPRHANNLANDFSCFANYQTLTFC.

It belongs to the class I-like SAM-binding methyltransferase superfamily. EFM5 family.

It is found in the cytoplasm. Functionally, S-adenosyl-L-methionine-dependent protein-lysine N-methyltransferase that methylates elongation factor 1-alpha. The sequence is that of Protein-lysine N-methyltransferase M142.8 from Caenorhabditis elegans.